Here is a 157-residue protein sequence, read N- to C-terminus: MADNARAKRLADLIREVVAQKLQRGIKDPRLGSQVTITDTRVTGDLREATVFYTVYGDDEERAAAAAGLESAKGVLRSAVGAAAGVKFTPTLTFVADALPDTAKTIEDLLDKARASDAKVREVSAGAQFAGDADPYRKPESDDESDTAAKTDGDAAE.

A disordered region spans residues 124–157 (SAGAQFAGDADPYRKPESDDESDTAAKTDGDAAE). Basic and acidic residues predominate over residues 147-157 (TAAKTDGDAAE).

This sequence belongs to the RbfA family. Monomer. Binds 30S ribosomal subunits, but not 50S ribosomal subunits or 70S ribosomes.

It localises to the cytoplasm. In terms of biological role, one of several proteins that assist in the late maturation steps of the functional core of the 30S ribosomal subunit. Associates with free 30S ribosomal subunits (but not with 30S subunits that are part of 70S ribosomes or polysomes). Required for efficient processing of 16S rRNA. May interact with the 5'-terminal helix region of 16S rRNA. This chain is Ribosome-binding factor A, found in Streptomyces avermitilis (strain ATCC 31267 / DSM 46492 / JCM 5070 / NBRC 14893 / NCIMB 12804 / NRRL 8165 / MA-4680).